Reading from the N-terminus, the 268-residue chain is MSHAPFIAVIPARLASTRLPNKPLADIGGKPMVVRVAERAHQSSAARVVVATDAVSVADACMQHHIEAVLTRADHASGTDRLAEVATVLALPDDAIVVNVQGDEPLIAPTLIDNVAAHLRDHADCAIATAAHPIRAAADIFNPNVVKVVLDAAERALLFSRAPLPWARDAWTPAALDQPAAERPLPAMPVLRHIGIYAYRAAFLRRFPQLAAAPLEQTEQLEQLRAMWHGERIAVLTTDDAPAAGVDTAEDLARVRAAWSDLLSQDGP.

This sequence belongs to the KdsB family.

Its subcellular location is the cytoplasm. The enzyme catalyses 3-deoxy-alpha-D-manno-oct-2-ulosonate + CTP = CMP-3-deoxy-beta-D-manno-octulosonate + diphosphate. It functions in the pathway nucleotide-sugar biosynthesis; CMP-3-deoxy-D-manno-octulosonate biosynthesis; CMP-3-deoxy-D-manno-octulosonate from 3-deoxy-D-manno-octulosonate and CTP: step 1/1. The protein operates within bacterial outer membrane biogenesis; lipopolysaccharide biosynthesis. Activates KDO (a required 8-carbon sugar) for incorporation into bacterial lipopolysaccharide in Gram-negative bacteria. The protein is 3-deoxy-manno-octulosonate cytidylyltransferase of Ralstonia nicotianae (strain ATCC BAA-1114 / GMI1000) (Ralstonia solanacearum).